A 1041-amino-acid chain; its full sequence is Histone deacetylase complex subunit SAP130-B (1041 aa).

Disordered regions lie at residues 1–62 (MSSQ…QEPV), 111–131 (KSTM…SAVP), 572–592 (TNQG…EPKS), 614–769 (TPAG…PSGA), and 806–852 (VLAN…DEER). The segment covering 18-30 (VSNSGASVGQNVQ) has biased composition (polar residues). The span at 33–42 (EVAREIDVQS) shows a compositional bias: basic and acidic residues. A compositionally biased stretch (low complexity) spans 576–592 (VQTSSVSSQQASSEPKS). Residues 614-641 (TPAGTTVMQSHSQSPGIGSSPAQGSSPR) show a composition bias toward polar residues. Over residues 707–728 (PGAADQPSAAASLPSSHHPTAA) the composition is skewed to low complexity.

Belongs to the SAP130 family.

The protein localises to the nucleus. Functionally, acts as a transcriptional repressor. This chain is Histone deacetylase complex subunit SAP130-B (sap130-b), found in Xenopus laevis (African clawed frog).